Consider the following 141-residue polypeptide: Nucleoside triphosphatase NudI (141 aa).

The Nudix hydrolase domain maps to 1–141; it reads MRQRTIVCPL…RHTLALKGLL (141 aa). Residues 38–59 carry the Nudix box motif; the sequence is GGVEPGERIEEALRREIREELG.

The protein belongs to the Nudix hydrolase family. NudI subfamily. In terms of assembly, monomer. The cofactor is Mg(2+).

The enzyme catalyses a ribonucleoside 5'-triphosphate + H2O = a ribonucleoside 5'-phosphate + diphosphate + H(+). The catalysed reaction is a 2'-deoxyribonucleoside 5'-triphosphate + H2O = a 2'-deoxyribonucleoside 5'-phosphate + diphosphate + H(+). It carries out the reaction dUTP + H2O = dUMP + diphosphate + H(+). It catalyses the reaction dTTP + H2O = dTMP + diphosphate + H(+). The enzyme catalyses dCTP + H2O = dCMP + diphosphate + H(+). In terms of biological role, catalyzes the hydrolysis of nucleoside triphosphates, with a preference for pyrimidine deoxynucleoside triphosphates (dUTP, dTTP and dCTP). This chain is Nucleoside triphosphatase NudI, found in Salmonella paratyphi B (strain ATCC BAA-1250 / SPB7).